We begin with the raw amino-acid sequence, 228 residues long: Thymidylate kinase (228 aa).

Residue Gly20–Ser27 coordinates ATP.

The protein belongs to the thymidylate kinase family.

The catalysed reaction is dTMP + ATP = dTDP + ADP. Its function is as follows. Phosphorylation of dTMP to form dTDP in both de novo and salvage pathways of dTTP synthesis. This is Thymidylate kinase from Afipia carboxidovorans (strain ATCC 49405 / DSM 1227 / KCTC 32145 / OM5) (Oligotropha carboxidovorans).